The following is a 221-amino-acid chain: Translation initiation factor 6 (221 aa).

It belongs to the eIF-6 family.

Functionally, binds to the 50S ribosomal subunit and prevents its association with the 30S ribosomal subunit to form the 70S initiation complex. The polypeptide is Translation initiation factor 6 (Cenarchaeum symbiosum (strain A)).